We begin with the raw amino-acid sequence, 37 residues long: Delta-amaurobitoxin-Pl1b (37 aa).

Intrachain disulfides connect Cys-2–Cys-18, Cys-9–Cys-23, Cys-17–Cys-33, and Cys-25–Cys-31. A Serine amide modification is found at Ser-37.

This sequence belongs to the neurotoxin 07 (Beta/delta-agtx) family. 02 (aga-3) subfamily. Expressed by the venom gland.

The protein localises to the secreted. Its function is as follows. Insecticidal toxin. Binds to site 4 of insect voltage-gated sodium channel (Nav) and inhibits channel inactivation. In vivo, it lethal to lepidopteran larvae. Has no adverse affects when intracerebroventricularly injected in mice at a dose of 0.2 ug, but causes reversible paralysis of legs when injected intracerebroventricularly in mice at a dose of 2.0 ug. The polypeptide is Delta-amaurobitoxin-Pl1b (Pireneitega luctuosa (Tangled nest spider)).